Here is a 998-residue protein sequence, read N- to C-terminus: Mis18-binding protein 1 (998 aa).

Residue K7 forms a Glycyl lysine isopeptide (Lys-Gly) (interchain with G-Cter in SUMO2) linkage. S9, S109, and S134 each carry phosphoserine. A disordered region spans residues Q122–K153. Residues E142–K153 show a composition bias toward basic and acidic residues. S169 and S258 each carry phosphoserine. The region spanning V336–E422 is the SANTA domain. 2 disordered regions span residues K438–K460 and D476–R502. Residues P488–S497 are compositionally biased toward polar residues. A phosphothreonine mark is found at T516 and T578. S638 and S639 each carry phosphoserine. The tract at residues S638 to N660 is disordered. Positions V644–N660 are enriched in basic and acidic residues. T688 carries the post-translational modification Phosphothreonine. Residue K707 forms a Glycyl lysine isopeptide (Lys-Gly) (interchain with G-Cter in SUMO2) linkage. S726 carries the post-translational modification Phosphoserine. Positions T741 to G796 constitute an SANT domain. Residue K765 forms a Glycyl lysine isopeptide (Lys-Gly) (interchain with G-Cter in SUMO2) linkage. Positions C784 to K821 are disordered. Positions S797–A807 are enriched in basic residues. Positions N812–K821 are enriched in basic and acidic residues. Residues K821, K828, and K847 each participate in a glycyl lysine isopeptide (Lys-Gly) (interchain with G-Cter in SUMO2) cross-link. At S872 the chain carries Phosphoserine. Residue K948 forms a Glycyl lysine isopeptide (Lys-Gly) (interchain with G-Cter in SUMO2) linkage. Phosphoserine occurs at positions 955 and 985. The disordered stretch occupies residues S976 to D998. Over residues D981–K990 the composition is skewed to acidic residues.

Interacts with SP1. Interacts with MIS18A. Identified in a complex containing MIS18A, OIP5/MIS18B, MIS18BP1, RBBP7 and RBBP4. Interacts with KAT7/HBO1. Interacts (via N-terminus) with FLNA (via N-terminus).

It is found in the nucleus. The protein resides in the chromosome. The protein localises to the centromere. Functionally, required for recruitment of CENPA to centromeres and normal chromosome segregation during mitosis. In Mus musculus (Mouse), this protein is Mis18-binding protein 1 (Mis18bp1).